The sequence spans 85 residues: Large ribosomal subunit protein bL27 (85 aa).

The segment covering Met1 to Thr10 has biased composition (gly residues). Residues Met1–Met20 are disordered.

The protein belongs to the bacterial ribosomal protein bL27 family.

The chain is Large ribosomal subunit protein bL27 from Methylibium petroleiphilum (strain ATCC BAA-1232 / LMG 22953 / PM1).